The primary structure comprises 206 residues: Small ribosomal subunit protein uS4 (206 aa).

One can recognise an S4 RNA-binding domain in the interval 96 to 156; the sequence is SRLDNVVYRM…EKSKKQLRIQ (61 aa).

Belongs to the universal ribosomal protein uS4 family. In terms of assembly, part of the 30S ribosomal subunit. Contacts protein S5. The interaction surface between S4 and S5 is involved in control of translational fidelity.

One of the primary rRNA binding proteins, it binds directly to 16S rRNA where it nucleates assembly of the body of the 30S subunit. Its function is as follows. With S5 and S12 plays an important role in translational accuracy. The polypeptide is Small ribosomal subunit protein uS4 (Francisella philomiragia subsp. philomiragia (strain ATCC 25017 / CCUG 19701 / FSC 153 / O#319-036)).